A 317-amino-acid polypeptide reads, in one-letter code: Probable cell division protein WhiA (317 aa).

A DNA-binding region (H-T-H motif) is located at residues 281-314 (SLKELGKMLEPPVGKSGVNHRLRKIEKIAEELRK).

Belongs to the WhiA family.

Functionally, involved in cell division and chromosome segregation. The chain is Probable cell division protein WhiA from Clostridium acetobutylicum (strain ATCC 824 / DSM 792 / JCM 1419 / IAM 19013 / LMG 5710 / NBRC 13948 / NRRL B-527 / VKM B-1787 / 2291 / W).